We begin with the raw amino-acid sequence, 41 residues long: Large ribosomal subunit protein bL36 (41 aa).

This sequence belongs to the bacterial ribosomal protein bL36 family.

The polypeptide is Large ribosomal subunit protein bL36 (Bartonella bacilliformis (strain ATCC 35685 / KC583 / Herrer 020/F12,63)).